The primary structure comprises 1359 residues: Regulatory-associated protein of TOR 2 (1359 aa).

Disordered stretches follow at residues 17–64 (SSAA…PQVA) and 782–819 (SDNS…QHSD). Residues 32–50 (HLVDDHLPVENGPDPRRDV) are compositionally biased toward basic and acidic residues. A compositionally biased stretch (polar residues) spans 782-805 (SDNSATARDGRISTSSPIATNSIM). Over residues 806–819 (HGSPQSDDSSQHSD) the composition is skewed to low complexity. WD repeat units lie at residues 1041–1080 (RFEL…PVNT), 1087–1127 (SDRG…GGQK), 1139–1178 (RSAG…VNTI), 1181–1221 (TADS…RLVY), 1228–1269 (PRSE…EPYL), 1273–1312 (AHRG…LTII), and 1321–1359 (QRIG…YQVR).

Belongs to the WD repeat RAPTOR family. As to quaternary structure, the target of rapamycin complex 1 (TORC1) is composed of at least RAPTOR, LST8 and TOR.

In terms of biological role, component of TORC1 complex, which is an essential cell growth regulator that controls plant development. Acts by recruiting substrates for TOR. Acts by activating transcription, protein synthesis and ribosome biogenesis, and inhibiting mRNA degradation and autophagy. The protein is Regulatory-associated protein of TOR 2 (RAPTOR2) of Oryza sativa subsp. japonica (Rice).